Here is a 193-residue protein sequence, read N- to C-terminus: Pre-histone-like nucleoprotein (193 aa).

Ser2 is subject to N-acetylserine; by host. A propeptide spanning residues 2–24 is cleaved from the precursor; that stretch reads SIFISPSNNTGWGLRAPSKMYGG. Lys48 is subject to N6-acetyllysine; by host. Position 55 is a phosphothreonine; by host (Thr55). Residues 183-193 carry the Nuclear localization signal motif; the sequence is RVPVRTRPPRT.

It belongs to the adenoviridae histone-like nucleoprotein family. In terms of assembly, interacts with the core-capsid bridging protein; this interaction bridges the virus core to the capsid. Interacts with host NPM1; this interaction might play a role in placing the pre-histone-like nucleoprotein on the viral DNA or regulating viral gene expression. Interacts with host HMGB1; this interaction inhibits host immune response. Post-translationally, cleaved near the N-terminus by the viral protease during virion maturation to form the mature protein.

The protein resides in the virion. It localises to the host nucleus. Its subcellular location is the host nucleolus. In terms of biological role, plays a role in the inhibition of host immune response within the nucleus. Interacts with cellular nucleosomes and immobilizes the host immune danger signal HMGB1 on chromatin. In turn, prevents HMGB1 release out of the cell and thus decreases inflammation. Also plays a role in the wrapping and condensation of the viral DNA. May also promote viral genome import into the nucleus. This chain is Pre-histone-like nucleoprotein, found in Homo sapiens (Human).